The sequence spans 308 residues: Taste receptor type 2 member 43 (308 aa).

Position 1 (methionine 1) is a topological domain, extracellular. Residues 2–22 traverse the membrane as a helical segment; sequence ITFLPIIFSILVVFTFVIGNF. The Cytoplasmic segment spans residues 23 to 46; the sequence is ANGFIALVNSIEWVKRQKISFADQ. The chain crosses the membrane as a helical span at residues 47–67; it reads ILTALAVSRVGLLWILLLNWY. At 68-86 the chain is on the extracellular side; the sequence is STVLNPAFYSVEVRTIAYN. Residues 87-107 form a helical membrane-spanning segment; the sequence is LWAVINHFSNWLATSLSIFYL. The Cytoplasmic segment spans residues 108–126; it reads LKIANFSNLIFLHLRRRVK. The helical transmembrane segment at 127–147 threads the bilayer; that stretch reads SVVLVILWGPLLFLVCHLFVV. Residues 148–178 lie on the Extracellular side of the membrane; it reads NMNEIIQTKEYEGNMTWKSKLRSAMYLSNTT. N-linked (GlcNAc...) asparagine glycans are attached at residues asparagine 161 and asparagine 176. A helical transmembrane segment spans residues 179–199; sequence VTILANLVPFILTLISFLLLI. The Cytoplasmic portion of the chain corresponds to 200–229; it reads CSLCKHLKKMQLRDKGSQDPSTKVHIKALQ. A helical membrane pass occupies residues 230–249; it reads TVISLSLCAIYFLSIMISSW. The Extracellular segment spans residues 250-258; that stretch reads SLGRVENKA. Residues 259–279 form a helical membrane-spanning segment; it reads IFMFCKAIRFSYPSAHAFILI. Residues 280 to 308 lie on the Cytoplasmic side of the membrane; it reads WGNKKLKQTLLSVLWNVRYCVKGQKLQSP.

This sequence belongs to the G-protein coupled receptor T2R family.

The protein localises to the membrane. Its subcellular location is the cell projection. It is found in the cilium membrane. Its function is as follows. Gustducin-coupled receptor immplicated in the perception of bitter compounds in the oral cavity and the gastrointestinal tract. Signals through PLCB2 and the calcium-regulated cation channel TRPM5. Activated by the sulfonyl amide sweeteners saccharin and acesulfame K. In airway epithelial cells, binding of bitter compounds increases the intracellular calcium ion concentration and stimulates ciliary beat frequency. May act as chemosensory receptors in airway epithelial cells to detect and eliminate potential noxious agents from the airways. The protein is Taste receptor type 2 member 43 (TAS2R43) of Macaca mulatta (Rhesus macaque).